Here is a 216-residue protein sequence, read N- to C-terminus: Phosphoribosylaminoimidazole-succinocarboxamide synthase (216 aa).

This sequence belongs to the SAICAR synthetase family.

It catalyses the reaction 5-amino-1-(5-phospho-D-ribosyl)imidazole-4-carboxylate + L-aspartate + ATP = (2S)-2-[5-amino-1-(5-phospho-beta-D-ribosyl)imidazole-4-carboxamido]succinate + ADP + phosphate + 2 H(+). It participates in purine metabolism; IMP biosynthesis via de novo pathway; 5-amino-1-(5-phospho-D-ribosyl)imidazole-4-carboxamide from 5-amino-1-(5-phospho-D-ribosyl)imidazole-4-carboxylate: step 1/2. The protein is Phosphoribosylaminoimidazole-succinocarboxamide synthase (purC) of Aquifex aeolicus (strain VF5).